Consider the following 621-residue polypeptide: Elongation factor 4 (621 aa).

Residues 21 to 203 (DLIRNICIIA…AIVKRVPPPK (183 aa)) enclose the tr-type G domain. GTP-binding positions include 33–38 (DHGKTT) and 150–153 (NKID).

Belongs to the TRAFAC class translation factor GTPase superfamily. Classic translation factor GTPase family. LepA subfamily.

It is found in the cell inner membrane. The catalysed reaction is GTP + H2O = GDP + phosphate + H(+). Required for accurate and efficient protein synthesis under certain stress conditions. May act as a fidelity factor of the translation reaction, by catalyzing a one-codon backward translocation of tRNAs on improperly translocated ribosomes. Back-translocation proceeds from a post-translocation (POST) complex to a pre-translocation (PRE) complex, thus giving elongation factor G a second chance to translocate the tRNAs correctly. Binds to ribosomes in a GTP-dependent manner. In Thermotoga maritima (strain ATCC 43589 / DSM 3109 / JCM 10099 / NBRC 100826 / MSB8), this protein is Elongation factor 4.